A 172-amino-acid polypeptide reads, in one-letter code: Conglutin-7 (172 aa).

The signal sequence occupies residues 1-21 (MAKLTILVALALFLLAAHASA). 4 disulfides stabilise this stretch: Cys33/Cys116, Cys45/Cys103, Cys104/Cys152, and Cys118/Cys160. The disordered stretch occupies residues 54 to 98 (QRDEDSYGRDPYSPSQDPYSPSQDPDRRDPYSPSPYDRRGAGSSQ). A compositionally biased stretch (low complexity) spans 62–76 (RDPYSPSQDPYSPSQ). Pro67, Pro74, and Pro86 each carry 4-hydroxyproline. Basic and acidic residues predominate over residues 77-98 (DPDRRDPYSPSPYDRRGAGSSQ).

Belongs to the 2S seed storage albumins family. The hydroxyproline modifications determined by mass spectrometry are probably 4-hydroxyproline as determined for other extracellular plant proteins. As to expression, expressed in seeds, not expressed in leaves, roots and pegs.

Weak inhibitor of trypsin. This is Conglutin-7 from Arachis hypogaea (Peanut).